Here is a 403-residue protein sequence, read N- to C-terminus: S-adenosylmethionine synthase (403 aa).

Residue His-17 coordinates ATP. A Mg(2+)-binding site is contributed by Asp-19. Glu-45 contacts K(+). L-methionine contacts are provided by Glu-58 and Gln-104. Residues 104–114 are flexible loop; that stretch reads QSPDIAQGVDT. Residues 179–181, 250–251, Asp-259, 265–266, Ala-282, and Lys-286 contribute to the ATP site; these read DGK, KF, and RK. Residue Asp-259 coordinates L-methionine. Lys-290 provides a ligand contact to L-methionine.

This sequence belongs to the AdoMet synthase family. In terms of assembly, homotetramer; dimer of dimers. Mg(2+) serves as cofactor. The cofactor is K(+).

Its subcellular location is the cytoplasm. The enzyme catalyses L-methionine + ATP + H2O = S-adenosyl-L-methionine + phosphate + diphosphate. It participates in amino-acid biosynthesis; S-adenosyl-L-methionine biosynthesis; S-adenosyl-L-methionine from L-methionine: step 1/1. Functionally, catalyzes the formation of S-adenosylmethionine (AdoMet) from methionine and ATP. The overall synthetic reaction is composed of two sequential steps, AdoMet formation and the subsequent tripolyphosphate hydrolysis which occurs prior to release of AdoMet from the enzyme. This Mycobacterium marinum (strain ATCC BAA-535 / M) protein is S-adenosylmethionine synthase.